The following is a 624-amino-acid chain: Chaperone protein HtpG (624 aa).

Residues 1–336 (MKGQETRGFQ…SNDLPLNVSR (336 aa)) form an a; substrate-binding region. Residues 337 to 552 (EILQDSTVTR…ADEMGTQMAK (216 aa)) are b. The c stretch occupies residues 553-624 (LFAAAGQAMP…IKRVNALLLG (72 aa)).

It belongs to the heat shock protein 90 family. As to quaternary structure, homodimer.

It localises to the cytoplasm. In terms of biological role, molecular chaperone. Has ATPase activity. This Enterobacter sp. (strain 638) protein is Chaperone protein HtpG.